Reading from the N-terminus, the 426-residue chain is Serine--tRNA ligase (426 aa).

Residue 233 to 235 coordinates L-serine; it reads TSE. Residue 264 to 266 coordinates ATP; it reads RAE. Glu-287 lines the L-serine pocket. 351 to 354 serves as a coordination point for ATP; sequence EISS. L-serine is bound at residue Ser-387.

This sequence belongs to the class-II aminoacyl-tRNA synthetase family. Type-1 seryl-tRNA synthetase subfamily. Homodimer. The tRNA molecule binds across the dimer.

Its subcellular location is the cytoplasm. The catalysed reaction is tRNA(Ser) + L-serine + ATP = L-seryl-tRNA(Ser) + AMP + diphosphate + H(+). It catalyses the reaction tRNA(Sec) + L-serine + ATP = L-seryl-tRNA(Sec) + AMP + diphosphate + H(+). Its pathway is aminoacyl-tRNA biosynthesis; selenocysteinyl-tRNA(Sec) biosynthesis; L-seryl-tRNA(Sec) from L-serine and tRNA(Sec): step 1/1. Catalyzes the attachment of serine to tRNA(Ser). Is also able to aminoacylate tRNA(Sec) with serine, to form the misacylated tRNA L-seryl-tRNA(Sec), which will be further converted into selenocysteinyl-tRNA(Sec). This chain is Serine--tRNA ligase, found in Xanthomonas campestris pv. campestris (strain 8004).